Here is a 747-residue protein sequence, read N- to C-terminus: Fibroblast growth factor receptor (747 aa).

Residues M1 to L24 form the signal peptide. At K25–Y288 the chain is on the extracellular side. Residues N26, N42, and N63 are each glycosylated (N-linked (GlcNAc...) asparagine). Residues E47 to T68 form a disordered region. Ig-like C2-type domains are found at residues P74–D167 and P175–T267. C99 and C151 are disulfide-bonded. Residues N161, N185, N217, N227, and N240 are each glycosylated (N-linked (GlcNAc...) asparagine). A disulfide bridge links C198 with C251. A helical transmembrane segment spans residues L289–C309. Residues N310–V747 lie on the Cytoplasmic side of the membrane. Residues I377–L660 form the Protein kinase domain. Residues I383–V391 and K412 contribute to the ATP site. The active-site Proton acceptor is D525. At Y556 the chain carries Phosphotyrosine; by autocatalysis. The tract at residues Y679–P731 is disordered. A compositionally biased stretch (basic and acidic residues) spans I710–E719.

The protein belongs to the protein kinase superfamily. Tyr protein kinase family. Fibroblast growth factor receptor subfamily.

The protein localises to the membrane. The enzyme catalyses L-tyrosyl-[protein] + ATP = O-phospho-L-tyrosyl-[protein] + ADP + H(+). Its function is as follows. Receptor for basic fibroblast growth factor. This Ciona intestinalis (Transparent sea squirt) protein is Fibroblast growth factor receptor (FGFR).